The following is a 293-amino-acid chain: Ribokinase (293 aa).

Residues 11-13 (SMD), 39-43 (GKGAN), and glutamate 139 each bind substrate. ATP is bound by residues asparagine 183 and 210-215 (TEGKQG). Residues aspartate 236 and threonine 238 each coordinate K(+). Residues 241 to 242 (GD) and asparagine 266 each bind ATP. Position 242 (aspartate 242) interacts with substrate. Residue aspartate 242 is the Proton acceptor of the active site. Serine 272, serine 275, and glycine 277 together coordinate K(+).

It belongs to the carbohydrate kinase PfkB family. Ribokinase subfamily. Homodimer. The cofactor is Mg(2+).

It is found in the cytoplasm. It catalyses the reaction D-ribose + ATP = D-ribose 5-phosphate + ADP + H(+). It functions in the pathway carbohydrate metabolism; D-ribose degradation; D-ribose 5-phosphate from beta-D-ribopyranose: step 2/2. Its activity is regulated as follows. Activated by a monovalent cation that binds near, but not in, the active site. The most likely occupant of the site in vivo is potassium. Ion binding induces a conformational change that may alter substrate affinity. Its function is as follows. Catalyzes the phosphorylation of ribose at O-5 in a reaction requiring ATP and magnesium. The resulting D-ribose-5-phosphate can then be used either for sythesis of nucleotides, histidine, and tryptophan, or as a component of the pentose phosphate pathway. This is Ribokinase from Bacillus subtilis (strain 168).